The sequence spans 444 residues: E3 ubiquitin-protein ligase RNFT2 (444 aa).

Residues 1–181 lie on the Extracellular side of the membrane; the sequence is MWLFTVNQVL…ILLAKLCFQH (181 aa). 2 disordered regions span residues 13–41 and 92–149; these read MQRR…ASVD and PASR…PGTP. The span at 107 to 121 shows a compositional bias: basic residues; the sequence is YHHRQPHHHFHHGGH. A compositionally biased stretch (basic and acidic residues) spans 131 to 140; the sequence is GGDHRGHSEE. The helical transmembrane segment at 182–202 threads the bilayer; the sequence is KLGIAVCIGMASTFAYANSTL. Topologically, residues 203 to 214 are cytoplasmic; that stretch reads REQVSLKEKRSV. A helical transmembrane segment spans residues 215–235; sequence LVILWILAFLAGNTLYVLYTF. Over 236–255 the chain is Extracellular; it reads SSQQLYNSLIFLKPNLEMLD. Residues 256 to 276 traverse the membrane as a helical segment; that stretch reads FFDLLWIVGIADFVLKYITIA. Over 277 to 329 the chain is Cytoplasmic; that stretch reads LKCLIVALPKIILAVKSKGKFYLVIEELSQLFRSLVPIQLWYKYIMGDDSSNS. A helical transmembrane segment spans residues 330–350; it reads YFLGGVLIVLYSLCKSFDICG. Residues 351–444 are Extracellular-facing; it reads RVGGVRKALK…GATSAHFQVY (94 aa). An RING-type zinc finger spans residues 384–422; that stretch reads CAICQAEFREPLILLCQHVFCEECLCLWLDRERTCPLCR.

It localises to the membrane. In terms of biological role, E3 ubiquitin-protein ligase that negatively regulates IL3-dependent cellular responses through IL3RA ubiquitination and degradation by the proteasome, having an anti-inflammatory effect. The protein is E3 ubiquitin-protein ligase RNFT2 of Homo sapiens (Human).